The chain runs to 64 residues: Large ribosomal subunit protein uL29 (64 aa).

It belongs to the universal ribosomal protein uL29 family.

The polypeptide is Large ribosomal subunit protein uL29 (Solidesulfovibrio magneticus (strain ATCC 700980 / DSM 13731 / RS-1) (Desulfovibrio magneticus)).